The sequence spans 146 residues: GYVNGLNAAEETLRENRSSGDMDGSAAAMRSVSHNGCGHYLHHLFWRCMTPNGGGGEPTGDLRDRIESDFGSYEGWEAEFREAASWPAGGWALLVYDPVTKQLRNLAVQKHNDGALWSAHPILALDVWEHSYYFQYGPDRGGFVDA.

Residues His42, Asp126, and His130 each coordinate Mn(2+).

This sequence belongs to the iron/manganese superoxide dismutase family. Mn(2+) is required as a cofactor.

It catalyses the reaction 2 superoxide + 2 H(+) = H2O2 + O2. Functionally, destroys superoxide anion radicals which are normally produced within the cells and which are toxic to biological systems. In Haloferax mediterranei (Halobacterium mediterranei), this protein is Superoxide dismutase [Mn] 2 (sod2).